Here is a 198-residue protein sequence, read N- to C-terminus: Neutrophil gelatinase-associated lipocalin (198 aa).

The N-terminal stretch at 1-20 (MGLGVLCLALVLLGVLQSQA) is a signal peptide. Gln21 bears the Pyrrolidone carboxylic acid mark. Residue 72-74 (YST) coordinates a carboxymycobactin. A glycan (N-linked (GlcNAc...) asparagine) is linked at Asn85. A disulfide bridge connects residues Cys96 and Cys195. Tyr126 is a binding site for enterobactin. Residues Lys145, Lys154, and Tyr158 each coordinate a carboxymycobactin. Lys154 is an enterobactin binding site.

It belongs to the calycin superfamily. Lipocalin family. As to quaternary structure, monomer. Homodimer; disulfide-linked. Heterodimer; disulfide-linked with MMP9. Detected in the ureteric bud in embryonic kidney (at protein level).

The protein resides in the secreted. It is found in the cytoplasmic granule lumen. It localises to the cytoplasmic vesicle lumen. Its function is as follows. Iron-trafficking protein involved in multiple processes such as apoptosis, innate immunity and renal development. Binds iron through association with 2,3-dihydroxybenzoic acid (2,3-DHBA), a siderophore that shares structural similarities with bacterial enterobactin, and delivers or removes iron from the cell, depending on the context. Iron-bound form (holo-24p3) is internalized following binding to the SLC22A17 (24p3R) receptor, leading to release of iron and subsequent increase of intracellular iron concentration. In contrast, association of the iron-free form (apo-24p3) with the SLC22A17 (24p3R) receptor is followed by association with an intracellular siderophore, iron chelation and iron transfer to the extracellular medium, thereby reducing intracellular iron concentration. Involved in apoptosis due to interleukin-3 (IL3) deprivation: iron-loaded form increases intracellular iron concentration without promoting apoptosis, while iron-free form decreases intracellular iron levels, inducing expression of the proapoptotic protein BCL2L11/BIM, resulting in apoptosis. Involved in innate immunity; limits bacterial proliferation by sequestering iron bound to microbial siderophores, such as enterobactin. Can also bind siderophores from M.tuberculosis. This chain is Neutrophil gelatinase-associated lipocalin (Lcn2), found in Rattus norvegicus (Rat).